Reading from the N-terminus, the 242-residue chain is Glutamine transport ATP-binding protein GlnQ (242 aa).

Residues 2 to 236 (ITFQNVNKHY…PKEERARLFL (235 aa)) enclose the ABC transporter domain. 34–41 (GPSGSGKS) contributes to the ATP binding site.

Belongs to the ABC transporter superfamily. In terms of assembly, the complex is composed of two ATP-binding proteins (GlnQ), two transmembrane proteins (GlnM and GlnP) and a solute-binding protein (GlnH).

The protein resides in the cell membrane. Functionally, part of the ABC transporter complex GlnHMPQ involved in glutamine transport. Probably responsible for energy coupling to the transport system. In Bacillus subtilis (strain 168), this protein is Glutamine transport ATP-binding protein GlnQ (glnQ).